Consider the following 598-residue polypeptide: Elongation factor 4 (598 aa).

Positions glutamine 2–lysine 184 constitute a tr-type G domain. GTP is bound by residues aspartate 14–threonine 19 and asparagine 131–aspartate 134.

This sequence belongs to the TRAFAC class translation factor GTPase superfamily. Classic translation factor GTPase family. LepA subfamily.

It localises to the cell inner membrane. The enzyme catalyses GTP + H2O = GDP + phosphate + H(+). In terms of biological role, required for accurate and efficient protein synthesis under certain stress conditions. May act as a fidelity factor of the translation reaction, by catalyzing a one-codon backward translocation of tRNAs on improperly translocated ribosomes. Back-translocation proceeds from a post-translocation (POST) complex to a pre-translocation (PRE) complex, thus giving elongation factor G a second chance to translocate the tRNAs correctly. Binds to ribosomes in a GTP-dependent manner. The sequence is that of Elongation factor 4 from Aromatoleum aromaticum (strain DSM 19018 / LMG 30748 / EbN1) (Azoarcus sp. (strain EbN1)).